Here is a 797-residue protein sequence, read N- to C-terminus: Protocadherin beta-11 (797 aa).

The signal sequence occupies residues 1-26 (MENGGTRTQQIRQVLLLFVLLGMSQA). The Extracellular portion of the chain corresponds to 27 to 690 (GSETWSFSVA…AQTDFLTVYL (664 aa)). 5 Cadherin domains span residues 35–133 (VAEE…SPIF), 138–242 (MLLE…SPEF), 247–347 (YEVK…APEI), 352–451 (ITSP…APTF), and 456–561 (YTLF…SPFV). N-linked (GlcNAc...) asparagine glycosylation is found at N418, N436, N487, and N567. In terms of domain architecture, Cadherin 6 spans 568 to 671 (GSAPCTELVP…LVDGFSQPFL (104 aa)). A helical transmembrane segment spans residues 691–711 (VVALASVSSLFFFSVLLFVAV). Topologically, residues 712–797 (RLCRRSRAAS…TFQNSFGFNF (86 aa)) are cytoplasmic.

Its subcellular location is the cell membrane. Its function is as follows. Potential calcium-dependent cell-adhesion protein. May be involved in the establishment and maintenance of specific neuronal connections in the brain. This is Protocadherin beta-11 (PCDHB11) from Pan troglodytes (Chimpanzee).